Reading from the N-terminus, the 162-residue chain is Endoribonuclease YbeY (162 aa).

Zn(2+)-binding residues include histidine 117, histidine 121, and histidine 127.

This sequence belongs to the endoribonuclease YbeY family. Zn(2+) is required as a cofactor.

It localises to the cytoplasm. Single strand-specific metallo-endoribonuclease involved in late-stage 70S ribosome quality control and in maturation of the 3' terminus of the 16S rRNA. The chain is Endoribonuclease YbeY from Francisella tularensis subsp. holarctica (strain OSU18).